The chain runs to 623 residues: Leucine aminopeptidase 2 (623 aa).

Residues 136–138 (QCQ) and 273–278 (PYGGME) each bind a peptide. Histidine 302 contributes to the Zn(2+) binding site. Residue glutamate 303 is the Proton acceptor of the active site. The Zn(2+) site is built by histidine 306 and glutamate 325. The active-site Proton donor is tyrosine 390.

It belongs to the peptidase M1 family. Zn(2+) is required as a cofactor.

It is found in the cytoplasm. The protein localises to the nucleus. It catalyses the reaction an epoxide + H2O = an ethanediol. In terms of biological role, aminopeptidase that preferentially cleaves di- and tripeptides. Also has low epoxide hydrolase activity (in vitro). Can hydrolyze the epoxide leukotriene LTA(4) but it forms preferentially 5,6-dihydroxy-7,9,11,14-eicosatetraenoic acid rather than the cytokine leukotriene B(4) as the product compared to the homologous mammalian enzyme (in vitro). This is Leucine aminopeptidase 2 from Phaeosphaeria nodorum (strain SN15 / ATCC MYA-4574 / FGSC 10173) (Glume blotch fungus).